A 399-amino-acid polypeptide reads, in one-letter code: MVFELIRPAPLTEQKRSRDGCIYLYRAMKFIGWLPPKQGVLRYVYLTWTLMTFVWCTTYLPLGFLGSYMTQIKSFSPGEFLTSLQVCINAYGSSVKVAITYSMLWRLIKAKNILDQLDLRCTAMEEREKIHLVVARSNHAFLIFTFVYCGYAGSTYLSSVLSGRPPWQLYNPFIDWHDGTLKLWVASTLEYMVMSGAVLQDQLSDSYPLIYTLILRAHLDMLRERIRRLRSDENLSEAESYEELVKCVMDHKLILRYCAIIKPVIQGTIFTQFLLIGLVLGFTLINVFFFSDIWTGIASFMFVITILLQTFPFCYTCNLIMEDCESLTHAIFQSNWVDASRRYKTTLLYFLQNVQQPIVFIAGGIFQISMSSNISVAKFAFSVITITKQMNIADKFKTD.

The Cytoplasmic segment spans residues 1 to 45 (MVFELIRPAPLTEQKRSRDGCIYLYRAMKFIGWLPPKQGVLRYVY). Residues 46 to 66 (LTWTLMTFVWCTTYLPLGFLG) traverse the membrane as a helical segment. Over 67–83 (SYMTQIKSFSPGEFLTS) the chain is Extracellular. Residues 84–104 (LQVCINAYGSSVKVAITYSML) form a helical membrane-spanning segment. Topologically, residues 105–140 (WRLIKAKNILDQLDLRCTAMEEREKIHLVVARSNHA) are cytoplasmic. A helical membrane pass occupies residues 141–161 (FLIFTFVYCGYAGSTYLSSVL). Topologically, residues 162–178 (SGRPPWQLYNPFIDWHD) are extracellular. The helical transmembrane segment at 179–199 (GTLKLWVASTLEYMVMSGAVL) threads the bilayer. Residues 200-268 (QDQLSDSYPL…AIIKPVIQGT (69 aa)) are Cytoplasmic-facing. A helical membrane pass occupies residues 269–289 (IFTQFLLIGLVLGFTLINVFF). The Extracellular segment spans residues 290-292 (FSD). A helical transmembrane segment spans residues 293–313 (IWTGIASFMFVITILLQTFPF). Residues 314–356 (CYTCNLIMEDCESLTHAIFQSNWVDASRRYKTTLLYFLQNVQQ) lie on the Cytoplasmic side of the membrane. The chain crosses the membrane as a helical span at residues 357-377 (PIVFIAGGIFQISMSSNISVA). The Extracellular portion of the chain corresponds to 378 to 399 (KFAFSVITITKQMNIADKFKTD).

Belongs to the insect chemoreceptor superfamily. Heteromeric odorant receptor channel (TC 1.A.69) family. Or2a subfamily. In terms of assembly, interacts with Orco. Complexes exist early in the endomembrane system in olfactory sensory neurons (OSNs), coupling these complexes to the conserved ciliary trafficking pathway. Expressed in olfactory sensory neurons in the antenna.

It localises to the cell membrane. Its function is as follows. Odorant receptor which mediates acceptance or avoidance behavior, depending on its substrates. The odorant receptor repertoire encodes a large collection of odor stimuli that vary widely in identity, intensity, and duration. May form a complex with Orco to form odorant-sensing units, providing sensitive and prolonged odorant signaling and calcium permeability. Involved in the behavioral responses to ethyl acetate and pentyl acetate. The polypeptide is Odorant receptor 42b (Or42b) (Drosophila melanogaster (Fruit fly)).